The following is a 120-amino-acid chain: Ribosome-binding factor A (120 aa).

Belongs to the RbfA family. Monomer. Binds 30S ribosomal subunits, but not 50S ribosomal subunits or 70S ribosomes.

It localises to the cytoplasm. In terms of biological role, one of several proteins that assist in the late maturation steps of the functional core of the 30S ribosomal subunit. Associates with free 30S ribosomal subunits (but not with 30S subunits that are part of 70S ribosomes or polysomes). Required for efficient processing of 16S rRNA. May interact with the 5'-terminal helix region of 16S rRNA. The polypeptide is Ribosome-binding factor A (Lactobacillus delbrueckii subsp. bulgaricus (strain ATCC 11842 / DSM 20081 / BCRC 10696 / JCM 1002 / NBRC 13953 / NCIMB 11778 / NCTC 12712 / WDCM 00102 / Lb 14)).